The chain runs to 252 residues: N-glycosylase/DNA lyase (252 aa).

Gln32, Ser60, and Trp71 together coordinate 8-oxoguanine. The interval 129–193 is helix-hairpin-helix; it reads KTYYSDMEKL…KDSRIEKYTL (65 aa). Lys153 (schiff-base intermediate with DNA) is an active-site residue. 8-oxoguanine-binding residues include Phe157 and Pro183. Asp185 is a catalytic residue. Asp219 and Trp223 together coordinate 8-oxoguanine.

The protein belongs to the archaeal N-glycosylase/DNA lyase (AGOG) family.

It catalyses the reaction 2'-deoxyribonucleotide-(2'-deoxyribose 5'-phosphate)-2'-deoxyribonucleotide-DNA = a 3'-end 2'-deoxyribonucleotide-(2,3-dehydro-2,3-deoxyribose 5'-phosphate)-DNA + a 5'-end 5'-phospho-2'-deoxyribonucleoside-DNA + H(+). DNA repair enzyme that is part of the base excision repair (BER) pathway; protects from oxidative damage by removing the major product of DNA oxidation, 8-oxoguanine (GO), from single- and double-stranded DNA substrates. This chain is N-glycosylase/DNA lyase, found in Methanococcus maripaludis (strain DSM 14266 / JCM 13030 / NBRC 101832 / S2 / LL).